The sequence spans 394 residues: Endothelial cell-selective adhesion molecule (394 aa).

Residues 1–29 (MILQAGTPETSLLRVLFLGLSTLAAFSRA) form the signal peptide. The Extracellular segment spans residues 30–251 (QMELHVPPGL…LDVMTGSKAA (222 aa)). The Ig-like V-type domain maps to 37 to 146 (PGLNKLEAVE…EGKSIGHSIK (110 aa)). N-linked (GlcNAc...) asparagine glycans are attached at residues Asn111, Asn172, Asn216, and Asn239. In terms of domain architecture, Ig-like C2-type spans 159–243 (PSCSLQGVPY…GFAKCNVTLD (85 aa)). A disulfide bridge links Cys177 with Cys227. The chain crosses the membrane as a helical span at residues 252-272 (VVAGAVVGTFVGLVLIAGLVL). Topologically, residues 273–394 (LYQRRSKTLE…PAQSQAGSLV (122 aa)) are cytoplasmic. Residue Ser304 is modified to Phosphoserine. Composition is skewed to polar residues over residues 304–318 (SDTI…SVTS) and 335–347 (FTPT…QALS). A disordered region spans residues 304 to 372 (SDTISKNGTL…SLTPGGVSSS (69 aa)). Phosphothreonine occurs at positions 336 and 338. Residues Ser340, Ser343, Ser348, and Ser375 each carry the phosphoserine modification.

Interacts with MAGI1. In terms of tissue distribution, highly expressed in the heart and lung. Weakly expressed in the kidney and skin. Expression is restricted to the vascular endothelial cells. Expressed in the kidney, heart and tongue (at protein level). Also expressed on megakaryocytes and activated platelets.

The protein resides in the cell junction. It is found in the adherens junction. The protein localises to the tight junction. Its subcellular location is the cell membrane. Can mediate aggregation most likely through a homophilic molecular interaction. This Mus musculus (Mouse) protein is Endothelial cell-selective adhesion molecule (Esam).